A 427-amino-acid chain; its full sequence is Enolase (427 aa).

Gln163 serves as a coordination point for (2R)-2-phosphoglycerate. Glu205 (proton donor) is an active-site residue. Residues Asp242, Glu285, and Asp312 each contribute to the Mg(2+) site. 4 residues coordinate (2R)-2-phosphoglycerate: Lys337, Arg366, Ser367, and Lys388. Lys337 functions as the Proton acceptor in the catalytic mechanism.

Belongs to the enolase family. It depends on Mg(2+) as a cofactor.

It localises to the cytoplasm. The protein resides in the secreted. Its subcellular location is the cell surface. It carries out the reaction (2R)-2-phosphoglycerate = phosphoenolpyruvate + H2O. Its pathway is carbohydrate degradation; glycolysis; pyruvate from D-glyceraldehyde 3-phosphate: step 4/5. Functionally, catalyzes the reversible conversion of 2-phosphoglycerate (2-PG) into phosphoenolpyruvate (PEP). It is essential for the degradation of carbohydrates via glycolysis. The polypeptide is Enolase (Burkholderia orbicola (strain MC0-3)).